The chain runs to 66 residues: uncharacterized protein (66 aa).

Residues 5–59 (LKYYRALHNLTQEDLAKKLGVSRQTIIAIEKGKYDPSLKLAFKIAKFFGVKIEDI) form the HTH cro/C1-type domain. A DNA-binding region (H-T-H motif) is located at residues 16-35 (QEDLAKKLGVSRQTIIAIEK).

This is an uncharacterized protein from Methanocaldococcus jannaschii (strain ATCC 43067 / DSM 2661 / JAL-1 / JCM 10045 / NBRC 100440) (Methanococcus jannaschii).